The primary structure comprises 436 residues: MSQALPLITRQGDRIAIVRGLRTPFARQATVFHGVPAVDLGKMVVGEMLARSDIPADVIEQLVFGQVVQMPEAPNIAREIVLGTGMSVHTDAYSVSRACATSFQAVANVAESLMAGTIRAGIAGGADSSSVLPIGVSKTLARTLVDANKARTLSQKLKLFSRLRPRDLLPVPPAVAEYSTGLRMGDTAEQMAKSWGITREQQDALAHRSHQLAAKAWEEGKLSAEVMTAYAPPFREPLEQDNNIRKNSTLADYQKLRPAFDRKHGTVTAANSTPLTDGAAAVILMTESRAKELGLTPLGYLRSYAFTAIDVWQDMLLGPAWSTPLALERAGLTLADLTLIDMHEAFAAQTLANLQCLASERFAREVLGRSQATGEVDESKFNVLGGSIAYGHPFAATGARMITQTLHELRRRGGGFGLVTACAAGGLGAAMIVEAE.

Cysteine 99 serves as the catalytic Acyl-thioester intermediate. Residues histidine 392 and cysteine 422 each act as proton acceptor in the active site.

Belongs to the thiolase-like superfamily. Thiolase family. As to quaternary structure, heterotetramer of two alpha chains (FadJ) and two beta chains (FadI).

The protein localises to the cytoplasm. The enzyme catalyses an acyl-CoA + acetyl-CoA = a 3-oxoacyl-CoA + CoA. The protein operates within lipid metabolism; fatty acid beta-oxidation. In terms of biological role, catalyzes the final step of fatty acid oxidation in which acetyl-CoA is released and the CoA ester of a fatty acid two carbons shorter is formed. This Klebsiella pneumoniae (strain 342) protein is 3-ketoacyl-CoA thiolase.